A 373-amino-acid polypeptide reads, in one-letter code: 4-hydroxy-3-methylbut-2-en-1-yl diphosphate synthase (flavodoxin) (373 aa).

Positions 270, 273, 305, and 312 each coordinate [4Fe-4S] cluster.

This sequence belongs to the IspG family. Requires [4Fe-4S] cluster as cofactor.

The enzyme catalyses (2E)-4-hydroxy-3-methylbut-2-enyl diphosphate + oxidized [flavodoxin] + H2O + 2 H(+) = 2-C-methyl-D-erythritol 2,4-cyclic diphosphate + reduced [flavodoxin]. Its pathway is isoprenoid biosynthesis; isopentenyl diphosphate biosynthesis via DXP pathway; isopentenyl diphosphate from 1-deoxy-D-xylulose 5-phosphate: step 5/6. Converts 2C-methyl-D-erythritol 2,4-cyclodiphosphate (ME-2,4cPP) into 1-hydroxy-2-methyl-2-(E)-butenyl 4-diphosphate. The chain is 4-hydroxy-3-methylbut-2-en-1-yl diphosphate synthase (flavodoxin) from Photorhabdus laumondii subsp. laumondii (strain DSM 15139 / CIP 105565 / TT01) (Photorhabdus luminescens subsp. laumondii).